The sequence spans 147 residues: Protein Turandot Z (147 aa).

The first 23 residues, 1–23 (MYFAIRLSFVLAVLICLTGNGSA), serve as a signal peptide directing secretion.

The protein belongs to the Turandot family.

The protein resides in the secreted. A humoral factor that may play a role in stress tolerance. The chain is Protein Turandot Z from Drosophila melanogaster (Fruit fly).